An 87-amino-acid polypeptide reads, in one-letter code: UPF0250 protein BUAPTUC7_482 (87 aa).

The protein belongs to the UPF0250 family.

The polypeptide is UPF0250 protein BUAPTUC7_482 (Buchnera aphidicola subsp. Acyrthosiphon pisum (strain Tuc7)).